A 148-amino-acid chain; its full sequence is Ribosome maturation factor RimP (148 aa).

The protein belongs to the RimP family.

It is found in the cytoplasm. Its function is as follows. Required for maturation of 30S ribosomal subunits. This Nautilia profundicola (strain ATCC BAA-1463 / DSM 18972 / AmH) protein is Ribosome maturation factor RimP.